The primary structure comprises 425 residues: tRNA(Ile)-lysidine synthase (425 aa).

27–32 (SGGLDS) is an ATP binding site.

It belongs to the tRNA(Ile)-lysidine synthase family.

It is found in the cytoplasm. The enzyme catalyses cytidine(34) in tRNA(Ile2) + L-lysine + ATP = lysidine(34) in tRNA(Ile2) + AMP + diphosphate + H(+). Its function is as follows. Ligates lysine onto the cytidine present at position 34 of the AUA codon-specific tRNA(Ile) that contains the anticodon CAU, in an ATP-dependent manner. Cytidine is converted to lysidine, thus changing the amino acid specificity of the tRNA from methionine to isoleucine. In Streptococcus pneumoniae (strain Hungary19A-6), this protein is tRNA(Ile)-lysidine synthase.